Reading from the N-terminus, the 388-residue chain is 3-oxo-tetronate kinase (388 aa).

Residues Ser-258 and 360–363 (GGET) contribute to the ATP site.

The protein belongs to the four-carbon acid sugar kinase family.

It carries out the reaction 3-dehydro-L-erythronate + ATP = 3-dehydro-4-O-phospho-L-erythronate + ADP + H(+). The enzyme catalyses 3-dehydro-D-erythronate + ATP = 3-dehydro-4-O-phospho-D-erythronate + ADP + H(+). Its function is as follows. Catalyzes the ATP-dependent phosphorylation of 3-oxo-tetronate to 3-oxo-tetronate 4-phosphate. This Escherichia coli (strain K12) protein is 3-oxo-tetronate kinase.